We begin with the raw amino-acid sequence, 278 residues long: Acyl-[acyl-carrier-protein]--UDP-N-acetylglucosamine O-acyltransferase (278 aa).

It belongs to the transferase hexapeptide repeat family. LpxA subfamily. As to quaternary structure, homotrimer.

The protein resides in the cytoplasm. It catalyses the reaction a (3R)-hydroxyacyl-[ACP] + UDP-N-acetyl-alpha-D-glucosamine = a UDP-3-O-[(3R)-3-hydroxyacyl]-N-acetyl-alpha-D-glucosamine + holo-[ACP]. It functions in the pathway glycolipid biosynthesis; lipid IV(A) biosynthesis; lipid IV(A) from (3R)-3-hydroxytetradecanoyl-[acyl-carrier-protein] and UDP-N-acetyl-alpha-D-glucosamine: step 1/6. Involved in the biosynthesis of lipid A, a phosphorylated glycolipid that anchors the lipopolysaccharide to the outer membrane of the cell. This Brucella abortus (strain S19) protein is Acyl-[acyl-carrier-protein]--UDP-N-acetylglucosamine O-acyltransferase.